Consider the following 444-residue polypeptide: Interferon-induced protein 44 (444 aa).

Residues 1-152 (MAVTTRLTWL…IQDYEVFRCE (152 aa)) enclose the TLDc domain.

The protein belongs to the IFI44 family.

The protein localises to the cytoplasm. Functionally, this protein aggregates to form microtubular structures. The protein is Interferon-induced protein 44 (IFI44) of Homo sapiens (Human).